Reading from the N-terminus, the 406-residue chain is S-adenosylmethionine synthase (406 aa).

H16 contributes to the ATP binding site. D18 provides a ligand contact to Mg(2+). K(+) is bound at residue E44. The L-methionine site is built by E57 and Q109. The tract at residues 109 to 119 (QSPQIAQGVDE) is flexible loop. Residues 174–176 (DAK), 249–250 (RF), D258, 264–265 (RK), A281, and K285 contribute to the ATP site. D258 is a binding site for L-methionine. K289 is a binding site for L-methionine.

It belongs to the AdoMet synthase family. In terms of assembly, homotetramer; dimer of dimers. The cofactor is Mg(2+). K(+) serves as cofactor.

It is found in the cytoplasm. It catalyses the reaction L-methionine + ATP + H2O = S-adenosyl-L-methionine + phosphate + diphosphate. It functions in the pathway amino-acid biosynthesis; S-adenosyl-L-methionine biosynthesis; S-adenosyl-L-methionine from L-methionine: step 1/1. Its function is as follows. Catalyzes the formation of S-adenosylmethionine (AdoMet) from methionine and ATP. The overall synthetic reaction is composed of two sequential steps, AdoMet formation and the subsequent tripolyphosphate hydrolysis which occurs prior to release of AdoMet from the enzyme. This Sphingopyxis alaskensis (strain DSM 13593 / LMG 18877 / RB2256) (Sphingomonas alaskensis) protein is S-adenosylmethionine synthase.